The following is a 395-amino-acid chain: S-adenosylmethionine synthase 2 (395 aa).

Glu9 serves as a coordination point for Mg(2+). ATP is bound at residue His15. Glu43 is a binding site for K(+). Glu56 and Gln99 together coordinate L-methionine. ATP contacts are provided by residues 167-169 (DGK), 235-238 (SGRF), Asp246, 252-253 (RK), Ala269, Lys273, and Lys277. Residue Asp246 participates in L-methionine binding. An L-methionine-binding site is contributed by Lys277.

The protein belongs to the AdoMet synthase family. In terms of assembly, homotetramer. Requires Mn(2+) as cofactor. Mg(2+) serves as cofactor. The cofactor is Co(2+). K(+) is required as a cofactor.

Its subcellular location is the cytoplasm. The enzyme catalyses L-methionine + ATP + H2O = S-adenosyl-L-methionine + phosphate + diphosphate. Its pathway is amino-acid biosynthesis; S-adenosyl-L-methionine biosynthesis; S-adenosyl-L-methionine from L-methionine: step 1/1. Its function is as follows. Catalyzes the formation of S-adenosylmethionine from methionine and ATP. The reaction comprises two steps that are both catalyzed by the same enzyme: formation of S-adenosylmethionine (AdoMet) and triphosphate, and subsequent hydrolysis of the triphosphate. This chain is S-adenosylmethionine synthase 2 (METK2), found in Suaeda salsa (Seepweed).